Here is a 335-residue protein sequence, read N- to C-terminus: Nuclear distribution protein nudE homolog 1 (335 aa).

Positions 1-93 (MEDSGKTFSS…VQHSEGYRQI (93 aa)) are self-association. Residues 18–188 (WKDLAMTYKQ…ELAVQQKQEK (171 aa)) adopt a coiled-coil conformation. The interval 88-156 (EGYRQISALE…ERNAFLESEL (69 aa)) is interaction with PAFAH1B1. The interval 167 to 290 (QRLKDEARDL…QSPNRTGGPA (124 aa)) is interaction with CENPF. The segment at 181-246 (AVQQKQEKPR…DDSTGGTPLT (66 aa)) is disordered. Polar residues predominate over residues 204 to 214 (TAVQATGSVPS). Residue serine 211 is modified to Phosphoserine. Phosphothreonine occurs at positions 215 and 228. 2 positions are modified to phosphoserine: serine 231 and serine 239. 2 positions are modified to phosphothreonine: threonine 243 and threonine 246. Cysteine 274 carries S-palmitoyl cysteine; by ZDHHC2, ZDHHC3 and ZDHHC7 lipidation. Residues 279 to 335 (YDQSPNRTGGPASGRSSKNRDGGERRPSSTSVPLGDKGLDTSCRWLSKSTTRSSSSC) form a disordered region. Serine 282 is modified (phosphoserine). The segment covering 296–305 (KNRDGGERRP) has biased composition (basic and acidic residues). At serine 309 the chain carries Phosphoserine. The segment covering 325-335 (SKSTTRSSSSC) has biased composition (low complexity).

This sequence belongs to the nudE family. As to quaternary structure, homodimer. Interacts with CNTRL, LIS1, dynein, SLMAP and TCP1. Interacts with CENPF, dynactin, tubulin gamma, PAFAH1B1, PCM1 and PCNT. Interacts with ZNF365. Interacts with GTP-bound RAB9A and RAB9B; the interaction leads to RAB9-dynein motor tethering. Interacts (via C-terminus) with MCRS1 (via C-terminus); phosphorylation of NDE1 inhibits the interaction. In terms of processing, phosphorylated in mitosis. Phosphorylated in vitro by CDC2. Phosphorylation at Thr-246 is essential for the G2/M transition. In terms of tissue distribution, expressed in the neuroepithelium throughout the developing brain, including the cerebral cortex and cerebellum.

The protein localises to the cytoplasm. It localises to the cytoskeleton. Its subcellular location is the microtubule organizing center. The protein resides in the centrosome. It is found in the chromosome. The protein localises to the centromere. It localises to the kinetochore. Its subcellular location is the spindle. The protein resides in the cleavage furrow. It is found in the cytoplasmic vesicle membrane. Required for centrosome duplication and formation and function of the mitotic spindle. Essential for the development of the cerebral cortex. May regulate the production of neurons by controlling the orientation of the mitotic spindle during division of cortical neuronal progenitors of the proliferative ventricular zone of the brain. Orientation of the division plane perpendicular to the layers of the cortex gives rise to two proliferative neuronal progenitors whereas parallel orientation of the division plane yields one proliferative neuronal progenitor and a postmitotic neuron. A premature shift towards a neuronal fate within the progenitor population may result in an overall reduction in the final number of neurons and an increase in the number of neurons in the deeper layers of the cortex. Acts as a RAB9A/B effector that tethers RAB9-associated late endosomes to the dynein motor for their retrograde transport to the trans-Golgi network. The chain is Nuclear distribution protein nudE homolog 1 from Homo sapiens (Human).